The following is a 461-amino-acid chain: Decaprenylphosphoryl-beta-D-ribose oxidase (461 aa).

The region spanning 19–194 (TAPSVANVLR…MRATIEMTPT (176 aa)) is the FAD-binding PCMH-type domain. FAD is bound by residues 53–63 (ARGLGRSYGDN), Gly117, 122–125 (TVGG), 129–132 (CDIH), Ile184, and Tyr415.

Belongs to the DprE1 family. In terms of assembly, monomer. Although forming apparent dimer in crystals, DprE1 does not dimerize appreciably in solution. Interacts with DprE2 to form an epimerase complex.

Its subcellular location is the periplasm. It carries out the reaction trans,octa-cis-decaprenylphospho-beta-D-ribofuranose + FAD + H(+) = trans,octa-cis-decaprenylphospho-beta-D-erythro-pentofuranosid-2-ulose + FADH2. It participates in cell wall biogenesis; cell wall polysaccharide biosynthesis. Is inhibited by 8-nitro-benzothiazinones (BTZs) such as BTZ043 and PBTZ169; BTZs are a new class of antimycobacterial agents that kill M.tuberculosis in vitro, ex vivo, and in mouse models of tuberculosis. Is also inhibited by dinitrobenzamide derivatives (DNBs), which thus block formation of both cell-wall lipoarabinomannan and arabinogalactan via inhibition of decaprenyl-phospho-arabinose (DPA) synthesis; DNBs show high activity against intracellular growth of M.tuberculosis inside macrophages, including extensively drug resistant (XDR) strains. BTZs and DNBs are suicide inhibitors that act via covalent modification of DprE1; the essential nitro group of these compounds is reduced by DprE1 to a nitroso group, which then specifically reacts with Cys-387 of DprE1 to form an irreversible semimercaptal adduct. Many other compounds with diverse scaffolds were found to act as either covalent (e.g. nitroquinoxalines, nitroimidazoles) or non-covalent (e.g. the benzothiazole derivative TCA1, the 2-carboxyquinoxaline Ty38C, 8-pyrrole-benzothiazinones, 1,4-azaindoles, pyrazolopyridones, 4-aminoquinolone piperidine amides) DprE1 inhibitors. Component of the DprE1-DprE2 complex that catalyzes the 2-step epimerization of decaprenyl-phospho-ribose (DPR) to decaprenyl-phospho-arabinose (DPA), a key precursor that serves as the arabinose donor required for the synthesis of cell-wall arabinans. DprE1 catalyzes the first step of epimerization, namely FAD-dependent oxidation of the C2' hydroxyl of DPR to yield the keto intermediate decaprenyl-phospho-2'-keto-D-arabinose (DPX). The intermediate DPX is then transferred to DprE2 subunit of the epimerase complex, most probably through a 'substrate channel' at the interface of DprE1-DprE2 complex. Can also use farnesyl-phosphoryl-beta-D-ribofuranose (FPR) as substrate in vitro. Functionally, dprE1 is a highly vulnerable and fully validated tuberculosis drug target. The protein is Decaprenylphosphoryl-beta-D-ribose oxidase of Mycobacterium tuberculosis (strain CDC 1551 / Oshkosh).